A 1413-amino-acid polypeptide reads, in one-letter code: GTPase-activating protein and VPS9 domain-containing protein 1 (1413 aa).

The 239-residue stretch at serine 147–glycine 385 folds into the Ras-GAP domain. At serine 227 the chain carries Phosphoserine. A phosphothreonine mark is found at threonine 390 and threonine 458. Disordered regions lie at residues lysine 448 to lysine 474, leucine 540 to glycine 587, glutamate 718 to glutamine 799, and histidine 826 to proline 852. The segment covering lysine 451 to proline 467 has biased composition (polar residues). Tyrosine 460 is modified (phosphotyrosine). A Phosphoserine modification is found at serine 466. Threonine 470 is subject to Phosphothreonine. Serine 721, serine 725, and serine 736 each carry phosphoserine. Over residues serine 737 to aspartate 756 the composition is skewed to polar residues. Threonine 741 is modified (phosphothreonine). Position 745 is a phosphoserine (serine 745). A compositionally biased stretch (basic and acidic residues) spans isoleucine 757–cysteine 768. 8 positions are modified to phosphoserine: serine 856, serine 882, serine 883, serine 888, serine 894, serine 946, serine 972, and serine 999. The segment covering histidine 871 to serine 882 has biased composition (basic and acidic residues). The segment at histidine 871–tryptophan 957 is disordered. The segment covering serine 883–serine 897 has biased composition (low complexity). Residues aspartate 934–arginine 955 are compositionally biased toward basic and acidic residues. A disordered region spans residues valine 1011–alanine 1049. Residues glutamate 1016 to threonine 1026 are compositionally biased toward basic and acidic residues. Residues serine 1031 and serine 1038 each carry the phosphoserine modification. One can recognise a VPS9 domain in the interval isoleucine 1273–lysine 1413.

It belongs to the GAPVD1 family. As to quaternary structure, interacts with TRIP10/CIP4. Interacts with RAB5A.

The protein resides in the membrane. It localises to the endosome. Its function is as follows. Acts both as a GTPase-activating protein (GAP) and a guanine nucleotide exchange factor (GEF), and participates in various processes such as endocytosis, insulin receptor internalization or LC2A4/GLUT4 trafficking. Acts as a GEF for the Ras-related protein RAB31 by exchanging bound GDP for free GTP, leading to regulate LC2A4/GLUT4 trafficking. In the absence of insulin, it maintains RAB31 in an active state and promotes a futile cycle between LC2A4/GLUT4 storage vesicles and early endosomes, retaining LC2A4/GLUT4 inside the cells. Upon insulin stimulation, it is translocated to the plasma membrane, releasing LC2A4/GLUT4 from intracellular storage vesicles. Also involved in EGFR trafficking and degradation, possibly by promoting EGFR ubiquitination and subsequent degradation by the proteasome. Has GEF activity for Rab5 and GAP activity for Ras. The polypeptide is GTPase-activating protein and VPS9 domain-containing protein 1 (GAPVD1) (Bos taurus (Bovine)).